The following is a 155-amino-acid chain: Aspartate 1-decarboxylase (155 aa).

Serine 24 functions as the Schiff-base intermediate with substrate; via pyruvic acid in the catalytic mechanism. Serine 24 is modified (pyruvic acid (Ser)). Threonine 56 is a binding site for substrate. Tyrosine 57 serves as the catalytic Proton donor. 72–74 (GAA) serves as a coordination point for substrate.

The protein belongs to the PanD family. In terms of assembly, heterooctamer of four alpha and four beta subunits. Pyruvate is required as a cofactor. Post-translationally, is synthesized initially as an inactive proenzyme, which is activated by self-cleavage at a specific serine bond to produce a beta-subunit with a hydroxyl group at its C-terminus and an alpha-subunit with a pyruvoyl group at its N-terminus.

It localises to the cytoplasm. It carries out the reaction L-aspartate + H(+) = beta-alanine + CO2. It functions in the pathway cofactor biosynthesis; (R)-pantothenate biosynthesis; beta-alanine from L-aspartate: step 1/1. In terms of biological role, catalyzes the pyruvoyl-dependent decarboxylation of aspartate to produce beta-alanine. This chain is Aspartate 1-decarboxylase, found in Agrobacterium fabrum (strain C58 / ATCC 33970) (Agrobacterium tumefaciens (strain C58)).